Consider the following 299-residue polypeptide: Ribosomal protein uL3 glutamine methyltransferase (299 aa).

This sequence belongs to the protein N5-glutamine methyltransferase family. PrmB subfamily.

It carries out the reaction L-glutaminyl-[ribosomal protein uL3] + S-adenosyl-L-methionine = N(5)-methyl-L-glutaminyl-[ribosomal protein uL3] + S-adenosyl-L-homocysteine + H(+). In terms of biological role, methylates large ribosomal subunit protein uL3 on a specific glutamine residue. The sequence is that of Ribosomal protein uL3 glutamine methyltransferase from Neisseria gonorrhoeae (strain ATCC 700825 / FA 1090).